We begin with the raw amino-acid sequence, 283 residues long: Protein/nucleic acid deglycase HchA (283 aa).

Residues His-86, Glu-91, and His-123 each contribute to the Zn(2+) site. Cys-185 acts as the Nucleophile in catalysis.

It belongs to the peptidase C56 family. HchA subfamily. As to quaternary structure, homodimer.

The protein localises to the cytoplasm. The enzyme catalyses N(omega)-(1-hydroxy-2-oxopropyl)-L-arginyl-[protein] + H2O = lactate + L-arginyl-[protein] + H(+). It catalyses the reaction N(6)-(1-hydroxy-2-oxopropyl)-L-lysyl-[protein] + H2O = lactate + L-lysyl-[protein] + H(+). It carries out the reaction S-(1-hydroxy-2-oxopropyl)-L-cysteinyl-[protein] + H2O = lactate + L-cysteinyl-[protein] + H(+). The catalysed reaction is N(omega)-(1-hydroxy-2-oxoethyl)-L-arginyl-[protein] + H2O = L-arginyl-[protein] + glycolate + H(+). The enzyme catalyses N(6)-(1-hydroxy-2-oxoethyl)-L-lysyl-[protein] + H2O = glycolate + L-lysyl-[protein] + H(+). It catalyses the reaction S-(1-hydroxy-2-oxoethyl)-L-cysteinyl-[protein] + H2O = glycolate + L-cysteinyl-[protein] + H(+). It carries out the reaction N(2)-(1-hydroxy-2-oxopropyl)-dGTP + H2O = lactate + dGTP + H(+). The catalysed reaction is N(2)-(1-hydroxy-2-oxopropyl)-GTP + H2O = lactate + GTP + H(+). The enzyme catalyses N(2)-(1-hydroxy-2-oxopropyl)-GDP + H2O = lactate + GDP + H(+). It catalyses the reaction N(2)-(1-hydroxy-2-oxopropyl)-GMP + H2O = lactate + GMP + H(+). It carries out the reaction N(2)-(1-hydroxy-2-oxoethyl)-dGTP + H2O = dGTP + glycolate + H(+). The catalysed reaction is N(2)-(1-hydroxy-2-oxoethyl)-GTP + H2O = glycolate + GTP + H(+). The enzyme catalyses N(2)-(1-hydroxy-2-oxoethyl)-GDP + H2O = glycolate + GDP + H(+). It catalyses the reaction N(2)-(1-hydroxy-2-oxoethyl)-GMP + H2O = glycolate + GMP + H(+). It carries out the reaction an N(2)-(1-hydroxy-2-oxopropyl)-guanosine in RNA + H2O = a guanosine in RNA + lactate + H(+). The catalysed reaction is an N(2)-(1-hydroxy-2-oxopropyl)-2'-deoxyguanosine in DNA + H2O = a 2'-deoxyguanosine in DNA + lactate + H(+). The enzyme catalyses an N(2)-(1-hydroxy-2-oxoethyl)-guanosine in RNA + H2O = a guanosine in RNA + glycolate + H(+). It catalyses the reaction an N(2)-(1-hydroxy-2-oxoethyl)-2'-deoxyguanosine in DNA + H2O = a 2'-deoxyguanosine in DNA + glycolate + H(+). Functionally, protein and nucleotide deglycase that catalyzes the deglycation of the Maillard adducts formed between amino groups of proteins or nucleotides and reactive carbonyl groups of glyoxals. Thus, functions as a protein deglycase that repairs methylglyoxal- and glyoxal-glycated proteins, and releases repaired proteins and lactate or glycolate, respectively. Deglycates cysteine, arginine and lysine residues in proteins, and thus reactivates these proteins by reversing glycation by glyoxals. Acts on early glycation intermediates (hemithioacetals and aminocarbinols), preventing the formation of Schiff bases and advanced glycation endproducts (AGE). Also functions as a nucleotide deglycase able to repair glycated guanine in the free nucleotide pool (GTP, GDP, GMP, dGTP) and in DNA and RNA. Is thus involved in a major nucleotide repair system named guanine glycation repair (GG repair), dedicated to reversing methylglyoxal and glyoxal damage via nucleotide sanitization and direct nucleic acid repair. Plays an important role in protecting cells from carbonyl stress. This is Protein/nucleic acid deglycase HchA from Escherichia coli O139:H28 (strain E24377A / ETEC).